Here is a 275-residue protein sequence, read N- to C-terminus: Octanoyl-[GcvH]:protein N-octanoyltransferase (275 aa).

A BPL/LPL catalytic domain is found at 42–246 (GQSQPVVRLW…ALQAFGSRLE (205 aa)). Cys145 (acyl-thioester intermediate) is an active-site residue.

The protein belongs to the octanoyltransferase LipL family.

The catalysed reaction is N(6)-octanoyl-L-lysyl-[glycine-cleavage complex H protein] + L-lysyl-[lipoyl-carrier protein] = N(6)-octanoyl-L-lysyl-[lipoyl-carrier protein] + L-lysyl-[glycine-cleavage complex H protein]. It functions in the pathway protein modification; protein lipoylation via endogenous pathway; protein N(6)-(lipoyl)lysine from octanoyl-[acyl-carrier-protein]. Its function is as follows. Catalyzes the amidotransfer (transamidation) of the octanoyl moiety from octanoyl-GcvH to the lipoyl domain of the E2 subunit of lipoate-dependent enzymes. This is Octanoyl-[GcvH]:protein N-octanoyltransferase from Anoxybacillus flavithermus (strain DSM 21510 / WK1).